The following is a 548-amino-acid chain: Membrane protein insertase YidC (548 aa).

Helical transmembrane passes span 6–26 (NLIL…WESD), 357–377 (NWGV…FPLT), 424–444 (LGGC…YWAL), 455–475 (FALW…PILM), and 503–523 (PIIF…YWLV).

The protein belongs to the OXA1/ALB3/YidC family. Type 1 subfamily. As to quaternary structure, interacts with the Sec translocase complex via SecD. Specifically interacts with transmembrane segments of nascent integral membrane proteins during membrane integration.

The protein localises to the cell inner membrane. Required for the insertion and/or proper folding and/or complex formation of integral membrane proteins into the membrane. Involved in integration of membrane proteins that insert both dependently and independently of the Sec translocase complex, as well as at least some lipoproteins. Aids folding of multispanning membrane proteins. The sequence is that of Membrane protein insertase YidC from Aeromonas hydrophila subsp. hydrophila (strain ATCC 7966 / DSM 30187 / BCRC 13018 / CCUG 14551 / JCM 1027 / KCTC 2358 / NCIMB 9240 / NCTC 8049).